The chain runs to 297 residues: Coatomer subunit epsilon-2 (297 aa).

The protein belongs to the COPE family. As to quaternary structure, oligomeric complex that consists of at least the alpha, beta, beta', gamma, delta, epsilon and zeta subunits.

The protein localises to the cytoplasm. It localises to the golgi apparatus membrane. It is found in the cytoplasmic vesicle. The protein resides in the COPI-coated vesicle membrane. Functionally, the coatomer is a cytosolic protein complex that binds to dilysine motifs and reversibly associates with Golgi non-clathrin-coated vesicles, which further mediate biosynthetic protein transport from the ER, via the Golgi up to the trans Golgi network. The coatomer complex is required for budding from Golgi membranes, and is essential for the retrograde Golgi-to-ER transport of dilysine-tagged proteins. The chain is Coatomer subunit epsilon-2 from Oryza sativa subsp. indica (Rice).